The chain runs to 289 residues: tRNA (adenine(58)-N(1))-methyltransferase catalytic subunit TRMT61A (289 aa).

S2 is subject to N-acetylserine. Residues 20-22 (LGH), 35-42 (QTQTRHGV), 64-65 (GW), 85-89 (QILYS), and 110-117 (SGTGSGSV) contribute to the substrate site. Residues L87, 114-116 (SGS), E135, R140, 163-164 (DV), and D181 contribute to the S-adenosyl-L-methionine site. Substrate-binding positions include 180–183 (LDIP) and 205–212 (SFSPCIEQ). Residues 245 to 272 (LPPPDLGTGTDGPAGSDTSPFRSGTPMK) are disordered. A compositionally biased stretch (low complexity) spans 250-259 (LGTGTDGPAG). S263 bears the Phosphoserine mark. T278 provides a ligand contact to substrate.

This sequence belongs to the class I-like SAM-binding methyltransferase superfamily. TRM61 family. In terms of assembly, heterotetramer; composed of two copies of TRMT6 and two copies of TRMT61A.

The protein resides in the nucleus. It catalyses the reaction adenosine(58) in tRNA + S-adenosyl-L-methionine = N(1)-methyladenosine(58) in tRNA + S-adenosyl-L-homocysteine + H(+). The catalysed reaction is an adenosine in mRNA + S-adenosyl-L-methionine = an N(1)-methyladenosine in mRNA + S-adenosyl-L-homocysteine + H(+). In terms of biological role, catalytic subunit of tRNA (adenine-N(1)-)-methyltransferase, which catalyzes the formation of N(1)-methyladenine at position 58 (m1A58) in initiator methionyl-tRNA. Catalytic subunit of mRNA N(1)-methyltransferase complex, which mediates methylation of adenosine residues at the N(1) position of a small subset of mRNAs: N(1) methylation takes place in tRNA T-loop-like structures of mRNAs and is only present at low stoichiometries. This Homo sapiens (Human) protein is tRNA (adenine(58)-N(1))-methyltransferase catalytic subunit TRMT61A (TRMT61A).